The following is a 158-amino-acid chain: Oocyte-secreted protein 2 (158 aa).

The signal sequence occupies residues 1–17; sequence MALEVLMLLAVLIWTGA.

It belongs to the PLAC1 family. Highly expressed in oocytes.

Its subcellular location is the secreted. The protein localises to the cytoplasm. Its function is as follows. Involved in oocyte maturation. The polypeptide is Oocyte-secreted protein 2 (OOSP2) (Homo sapiens (Human)).